Here is a 124-residue protein sequence, read N- to C-terminus: Fluoride-specific ion channel FluC (124 aa).

Transmembrane regions (helical) follow at residues Met1 to Leu21, Val35 to Leu55, Leu68 to Phe88, and Phe99 to Ile119. Positions 75 and 78 each coordinate Na(+).

Belongs to the fluoride channel Fluc/FEX (TC 1.A.43) family.

The protein localises to the cell inner membrane. It carries out the reaction fluoride(in) = fluoride(out). With respect to regulation, na(+) is not transported, but it plays an essential structural role and its presence is essential for fluoride channel function. Its function is as follows. Fluoride-specific ion channel. Important for reducing fluoride concentration in the cell, thus reducing its toxicity. This Aquifex aeolicus (strain VF5) protein is Fluoride-specific ion channel FluC.